The following is a 193-amino-acid chain: Putative RING finger protein ORF38 (193 aa).

An RING-type zinc finger spans residues 12 to 50 (CCICLDDEDVDRDNTIPCRHTVCRTCYVKPMLDQCPVCR).

This chain is Putative RING finger protein ORF38, found in Magallana gigas (Pacific oyster).